Reading from the N-terminus, the 131-residue chain is Phosphoribosyl-ATP pyrophosphatase 2 (131 aa).

The interval 105 to 131 is disordered; the sequence is RIGKPAAPHATRRPVIPQEARAVRKHR.

It belongs to the PRA-PH family.

It localises to the cytoplasm. The enzyme catalyses 1-(5-phospho-beta-D-ribosyl)-ATP + H2O = 1-(5-phospho-beta-D-ribosyl)-5'-AMP + diphosphate + H(+). It functions in the pathway amino-acid biosynthesis; L-histidine biosynthesis; L-histidine from 5-phospho-alpha-D-ribose 1-diphosphate: step 2/9. The chain is Phosphoribosyl-ATP pyrophosphatase 2 (hisE2) from Rhodopseudomonas palustris (strain ATCC BAA-98 / CGA009).